Consider the following 195-residue polypeptide: Obelin (195 aa).

Residues Met-1–Ala-6 constitute a propeptide that is removed on maturation. EF-hand domains follow at residues Lys-17 to Lys-52, Asn-53 to Phe-88, Leu-110 to Ser-145, and Pro-146 to Thr-181. Positions 30, 32, 34, 36, and 41 each coordinate Ca(2+). Residues Asp-123, Asp-125, Ser-127, Thr-129, Glu-134, Asp-159, Asp-161, Ser-163, Glu-165, and Glu-170 each coordinate Ca(2+).

Belongs to the aequorin family.

Functionally, ca(2+)-dependent bioluminescence photoprotein. Displays an emission peak at 495 nm (blue light). Trace amounts of calcium ion trigger the intramolecular oxidation of the chromophore, coelenterazine into coelenteramide and CO(2) with the concomitant emission of light. The protein is Obelin of Obelia geniculata (Knotted thread hydroid).